A 261-amino-acid chain; its full sequence is NAD(P)H-quinone oxidoreductase subunit K, chloroplastic (261 aa).

[4Fe-4S] cluster is bound by residues Cys64, Cys65, Cys129, and Cys160.

It belongs to the complex I 20 kDa subunit family. In terms of assembly, NDH is composed of at least 16 different subunits, 5 of which are encoded in the nucleus. Requires [4Fe-4S] cluster as cofactor.

The protein localises to the plastid. It is found in the chloroplast thylakoid membrane. The enzyme catalyses a plastoquinone + NADH + (n+1) H(+)(in) = a plastoquinol + NAD(+) + n H(+)(out). It catalyses the reaction a plastoquinone + NADPH + (n+1) H(+)(in) = a plastoquinol + NADP(+) + n H(+)(out). NDH shuttles electrons from NAD(P)H:plastoquinone, via FMN and iron-sulfur (Fe-S) centers, to quinones in the photosynthetic chain and possibly in a chloroplast respiratory chain. The immediate electron acceptor for the enzyme in this species is believed to be plastoquinone. Couples the redox reaction to proton translocation, and thus conserves the redox energy in a proton gradient. The chain is NAD(P)H-quinone oxidoreductase subunit K, chloroplastic from Physcomitrium patens (Spreading-leaved earth moss).